We begin with the raw amino-acid sequence, 388 residues long: Chorismate synthase (388 aa).

Residues Arg-39 and Arg-45 each coordinate NADP(+). FMN-binding positions include 130 to 132 (RSS), 251 to 252 (NA), Gly-296, 311 to 315 (KPIPT), and Arg-337.

It belongs to the chorismate synthase family. As to quaternary structure, homotetramer. Requires FMNH2 as cofactor.

The enzyme catalyses 5-O-(1-carboxyvinyl)-3-phosphoshikimate = chorismate + phosphate. It functions in the pathway metabolic intermediate biosynthesis; chorismate biosynthesis; chorismate from D-erythrose 4-phosphate and phosphoenolpyruvate: step 7/7. Its function is as follows. Catalyzes the anti-1,4-elimination of the C-3 phosphate and the C-6 proR hydrogen from 5-enolpyruvylshikimate-3-phosphate (EPSP) to yield chorismate, which is the branch point compound that serves as the starting substrate for the three terminal pathways of aromatic amino acid biosynthesis. This reaction introduces a second double bond into the aromatic ring system. This chain is Chorismate synthase, found in Streptococcus mutans serotype c (strain ATCC 700610 / UA159).